Reading from the N-terminus, the 635-residue chain is MSAVSSIFDTPIPSAAKSSPSGSNKRPLAQNGHHSGEKQSKKSKKASKKQLIDLLVQEHARELSQNDSSASTVSTPKKKKKKNASASDINTSASKNVNAAKKKPKEGLKINLQNSKKKRKNFEVLNSSQQHADDALVETSFNGESLKNNSNHSTPVSKKPKKKNKQMPHPLAGTPNLAIKQEPQTPKANGMQRTSAQDSIVVGREKFAWVIHPTPVEDFMINYWEKKPLLIQRKNPSYYSNLLSRAKIDEMLRQNNIEYTKNIDVTSYREGQRETHNPDGRVLPPDMWSFYEEGCSIRMLNPQTYLPGVYEMNVKLQEFFHCMTGANFYLTPPNSQGFAPHYDDIEAFVLQVEGRKHWKLYSPREPAEMLARVSSPNFTQEEIGTPILEVVLEPGDLLYFPRGIIHQASTVPGHHSLHVTMSVYQKNCWADLLELFFPHALAQAAETHFDLRRGIPLNLHQHFGIVHSDSETPARKQLISHIKSLVDKVFSEDAIDSAVDQLAKRFQHDALPPLISNTEQSTTVYGSSFSHNPDGTVSLRVPFTENSTVRLLRCNVLRLVSEEEKLRIYYHTDNSREYHEYEPNFLEIDQDAALGVELLVKMYPHPVAIRDLPVEDKIEFAKSLWEKGLIVVHGQ.

2 disordered regions span residues 1–115 (MSAV…LQNS) and 141–190 (FNGE…KANG). The span at 84–99 (ASASDINTSASKNVNA) shows a compositional bias: low complexity. The segment covering 141 to 156 (FNGESLKNNSNHSTPV) has biased composition (polar residues). One can recognise a JmjC domain in the interval 295-440 (CSIRMLNPQT…DLLELFFPHA (146 aa)). Fe cation is bound by residues His341, Asp343, and His406.

This sequence belongs to the ROX family. NO66 subfamily. Requires Fe(2+) as cofactor.

It is found in the nucleus. It carries out the reaction N(6),N(6)-dimethyl-L-lysyl(36)-[histone H3] + 2 2-oxoglutarate + 2 O2 = L-lysyl(36)-[histone H3] + 2 formaldehyde + 2 succinate + 2 CO2. Its function is as follows. Oxygenase that can act as both a histone lysine demethylase and a ribosomal histidine hydroxylase. Specifically demethylates 'Lys-4' (H3K4me) and 'Lys-36' (H3K36me) of histone H3, thereby playing a central role in histone code. The polypeptide is Bifunctional lysine-specific demethylase and histidyl-hydroxylase NO66 (Aedes aegypti (Yellowfever mosquito)).